Reading from the N-terminus, the 181-residue chain is ATP synthase subunit delta (181 aa).

This sequence belongs to the ATPase delta chain family. In terms of assembly, F-type ATPases have 2 components, F(1) - the catalytic core - and F(0) - the membrane proton channel. F(1) has five subunits: alpha(3), beta(3), gamma(1), delta(1), epsilon(1). F(0) has three main subunits: a(1), b(2) and c(10-14). The alpha and beta chains form an alternating ring which encloses part of the gamma chain. F(1) is attached to F(0) by a central stalk formed by the gamma and epsilon chains, while a peripheral stalk is formed by the delta and b chains.

It localises to the cell membrane. Functionally, f(1)F(0) ATP synthase produces ATP from ADP in the presence of a proton or sodium gradient. F-type ATPases consist of two structural domains, F(1) containing the extramembraneous catalytic core and F(0) containing the membrane proton channel, linked together by a central stalk and a peripheral stalk. During catalysis, ATP synthesis in the catalytic domain of F(1) is coupled via a rotary mechanism of the central stalk subunits to proton translocation. Its function is as follows. This protein is part of the stalk that links CF(0) to CF(1). It either transmits conformational changes from CF(0) to CF(1) or is implicated in proton conduction. The chain is ATP synthase subunit delta from Lacticaseibacillus casei (strain BL23) (Lactobacillus casei).